The following is a 175-amino-acid chain: Small ribosomal subunit protein uS5 (175 aa).

The segment at 1-21 (MAKPERNKKPQQAEERDDGMR) is disordered. One can recognise an S5 DRBM domain in the interval 20-83 (MREKMVAVNR…EEARRKMAKV (64 aa)).

This sequence belongs to the universal ribosomal protein uS5 family. In terms of assembly, part of the 30S ribosomal subunit. Contacts proteins S4 and S8.

In terms of biological role, with S4 and S12 plays an important role in translational accuracy. Its function is as follows. Located at the back of the 30S subunit body where it stabilizes the conformation of the head with respect to the body. The sequence is that of Small ribosomal subunit protein uS5 from Dechloromonas aromatica (strain RCB).